A 483-amino-acid polypeptide reads, in one-letter code: MTVQTFIPNGAKAASENTVTQPTHTTDVSIKKLYIETQGCQMNEYDSHRMADLLGDSHGYVLTNNPNEADILLMNTCSIREKAQEKVFSELGRWRKLKEQNPDLVIGVGGCVASQEGDNIQKRAPYVDMIFGPQTLHRLPQMLDQHHAQVEKPKKEKIKLVDISFPDIEKFDFLPEPRVEGFKAFVSIMEGCSKYCSFCVVPYTRGEEVSRPLDDVLAEIAGLAEKGVREISLLGQNVNGYRGETFEGGICTFPELLRLVAEIPGIGRLRYTTSHPLEFSDELIQCYEDLPQMVSHLHLPVQSGSNDVLKAMKRNHTIDVYIDKIAKLRKIRPDMHLSSDFIIGFPGETDENFAETLQFIKDLDFDHSYSFVYSKRPGTPASDLPDTTPEHVKKERLAQVQQVIKQSSIEKTDAMLGKIERVLIEKVSDQDPNILVGTADNTRLVTFVGDASWIGRFAEIEITEIKTLNLVYGELLNLEPDVA.

Residues 31–148 (KKLYIETQGC…LPQMLDQHHA (118 aa)) form the MTTase N-terminal domain. Residues C40, C77, C111, C192, C196, and C199 each coordinate [4Fe-4S] cluster. The Radical SAM core domain occupies 178–410 (RVEGFKAFVS…QQVIKQSSIE (233 aa)). The TRAM domain maps to 413–477 (DAMLGKIERV…LNLVYGELLN (65 aa)).

The protein belongs to the methylthiotransferase family. MiaB subfamily. Monomer. [4Fe-4S] cluster serves as cofactor.

Its subcellular location is the cytoplasm. It carries out the reaction N(6)-dimethylallyladenosine(37) in tRNA + (sulfur carrier)-SH + AH2 + 2 S-adenosyl-L-methionine = 2-methylsulfanyl-N(6)-dimethylallyladenosine(37) in tRNA + (sulfur carrier)-H + 5'-deoxyadenosine + L-methionine + A + S-adenosyl-L-homocysteine + 2 H(+). Catalyzes the methylthiolation of N6-(dimethylallyl)adenosine (i(6)A), leading to the formation of 2-methylthio-N6-(dimethylallyl)adenosine (ms(2)i(6)A) at position 37 in tRNAs that read codons beginning with uridine. The protein is tRNA-2-methylthio-N(6)-dimethylallyladenosine synthase of Acinetobacter baumannii (strain ACICU).